Reading from the N-terminus, the 947-residue chain is Testis-expressed protein 11 (947 aa).

Belongs to the SPO22 family. In terms of assembly, interacts with SYCP2. Interacts with PBXIP1; may prevent interaction between PBXIP1 and ESR2. Interacts with SHOC1. Interacts with REDIC1. As to expression, testis-specific.

It is found in the chromosome. Its function is as follows. Regulator of crossing-over during meiosis. Involved in initiation and/or maintenance of chromosome synapsis and formation of crossovers. The sequence is that of Testis-expressed protein 11 (Tex11) from Mus musculus (Mouse).